We begin with the raw amino-acid sequence, 91 residues long: Small ribosomal subunit protein uS19 (91 aa).

It belongs to the universal ribosomal protein uS19 family.

Its function is as follows. Protein S19 forms a complex with S13 that binds strongly to the 16S ribosomal RNA. This Pseudomonas fluorescens (strain SBW25) protein is Small ribosomal subunit protein uS19.